The following is a 74-amino-acid chain: ATP synthase subunit c (74 aa).

Helical transmembrane passes span 8 to 28 and 52 to 72; these read FIGV…VSNI and IGAG…MLLI.

The protein belongs to the ATPase C chain family. As to quaternary structure, F-type ATPases have 2 components, F(1) - the catalytic core - and F(0) - the membrane proton channel. F(1) has five subunits: alpha(3), beta(3), gamma(1), delta(1), epsilon(1). F(0) has three main subunits: a(1), b(2) and c(10-14). The alpha and beta chains form an alternating ring which encloses part of the gamma chain. F(1) is attached to F(0) by a central stalk formed by the gamma and epsilon chains, while a peripheral stalk is formed by the delta and b chains.

Its subcellular location is the cell inner membrane. Functionally, f(1)F(0) ATP synthase produces ATP from ADP in the presence of a proton or sodium gradient. F-type ATPases consist of two structural domains, F(1) containing the extramembraneous catalytic core and F(0) containing the membrane proton channel, linked together by a central stalk and a peripheral stalk. During catalysis, ATP synthesis in the catalytic domain of F(1) is coupled via a rotary mechanism of the central stalk subunits to proton translocation. Its function is as follows. Key component of the F(0) channel; it plays a direct role in translocation across the membrane. A homomeric c-ring of between 10-14 subunits forms the central stalk rotor element with the F(1) delta and epsilon subunits. This chain is ATP synthase subunit c, found in Rickettsia bellii (strain RML369-C).